The sequence spans 269 residues: Shikimate dehydrogenase (NADP(+)) (269 aa).

Shikimate is bound by residues 22–24 and threonine 68; that span reads TLS. The active-site Proton acceptor is lysine 72. Shikimate-binding residues include asparagine 93 and aspartate 104. Residues 128 to 132, 152 to 157, and phenylalanine 210 each bind NADP(+); these read GAGGA and NRTKSR. Tyrosine 212 serves as a coordination point for shikimate. An NADP(+)-binding site is contributed by glycine 233.

Belongs to the shikimate dehydrogenase family. As to quaternary structure, homodimer.

It carries out the reaction shikimate + NADP(+) = 3-dehydroshikimate + NADPH + H(+). It participates in metabolic intermediate biosynthesis; chorismate biosynthesis; chorismate from D-erythrose 4-phosphate and phosphoenolpyruvate: step 4/7. Involved in the biosynthesis of the chorismate, which leads to the biosynthesis of aromatic amino acids. Catalyzes the reversible NADPH linked reduction of 3-dehydroshikimate (DHSA) to yield shikimate (SA). This Saccharolobus solfataricus (strain ATCC 35092 / DSM 1617 / JCM 11322 / P2) (Sulfolobus solfataricus) protein is Shikimate dehydrogenase (NADP(+)).